The primary structure comprises 125 residues: Succinate dehydrogenase assembly factor 3, mitochondrial (125 aa).

The N-terminal 30 residues, 1 to 30, are a transit peptide targeting the mitochondrion; the sequence is MPGKHVSRVRALYRRILLLHRALPPDLKAL.

This sequence belongs to the complex I LYR family. SDHAF3 subfamily. Interacts with Sdhb within an Sdha-Sdhb subcomplex.

The protein resides in the mitochondrion matrix. Functionally, plays an essential role in the assembly of succinate dehydrogenase (SDH), an enzyme complex (also referred to as respiratory complex II) that is a component of both the tricarboxylic acid (TCA) cycle and the mitochondrial electron transport chain, and which couples the oxidation of succinate to fumarate with the reduction of ubiquinone (coenzyme Q) to ubiquinol. Promotes maturation of the iron-sulfur protein subunit Sdhb of the SDH catalytic dimer, protecting it from the deleterious effects of oxidants. May act together with SDHAF1. This chain is Succinate dehydrogenase assembly factor 3, mitochondrial, found in Mus musculus (Mouse).